Here is a 945-residue protein sequence, read N- to C-terminus: MGNEAGPIFEESNAEVGTPPADAVHDDFFFDYKNATGYADDCNITGDCNETDDCDITGDCNETDDCNITGDCNETDDCNITGDCNETDDCNITGDCNETDDCNITGDCNETDDCDITGDCNETDDCNITGDCNETDDCNITGDCNETDDCNITGDCNETDDCDITGDCNETDDCNITGDCNETDDCDITGDCNETDDCNITGDCNETDDCNITGDCNETDDCNITGDCNETDDCNITGDCNETDDCNITGDCNETDDCNITGDCNETDDCDITGDCNETDDCNITGDCNETDDCNITGDCNETDDCNITGDCNETDDCNITGDCNETDDCNITGDCNETDDCNITGDCNETDDCDITGDCNETDDCNITGDCNETDDCNITGDCNETDDCNITGDCNETDDCNITGDCNETDDCNITGDCNETDDCDITGDCNETDDCNITGDCNETDDCDITGDCNETDDCNITGDCNETDDCNITGDCNETDDCNITGDCNETDDCNITGDCNETDDCNITGDCNETDDCNITGDCNETDDCDITGDCNETDDCNITGDCNETDDCNITGDCNETDDCNITGDCNETDDCNITGDCNETDDCNITGDCNETDDCDITGDCNETDDCNITGDCNETDDCDITGDCNETDDCNITGDCNETDDCNITGDCNETDDCNITGDCNETDDCNITGDCNETDDCNITGDCNETDDCNITGDCNETDDCDITGDCNETDDCNITGDCNETDDCNITGDCNETDDCNITGDCNETDDCNITGDCNETDDCNITGDCNETDDCDITGDCNETDDCNITGDCNETDDCDITGDCNETDDCNITGDCNETEVSDAADGTDGMFLKSSSSLKLVALCDGCPTEDSPKSSNAKGKGSSVSAGLLLLAGSTFLVLAVGLSAVLFLGRERQNAVVICDNEVMMEEVPGCLSDASFAVPVTQSSDEARP.

Positions 1–20 (MGNEAGPIFEESNAEVGTPP) are disordered. Positions 1–23 (MGNEAGPIFEESNAEVGTPPADA) are cleaved as a signal peptide. The Extracellular portion of the chain corresponds to 24–882 (VHDDFFFDYK…GKGSSVSAGL (859 aa)). N-linked (GlcNAc...) asparagine glycosylation is found at Asn-34 and Asn-43. 66 tandem repeats follow at residues 40 to 51 (DDCNITGDCNET), 52 to 63 (DDCDITGDCNET), 64 to 75 (DDCNITGDCNET), 76 to 87 (DDCNITGDCNET), 88 to 99 (DDCNITGDCNET), 100 to 111 (DDCNITGDCNET), 112 to 123 (DDCDITGDCNET), 124 to 135 (DDCNITGDCNET), 136 to 147 (DDCNITGDCNET), 148 to 159 (DDCNITGDCNET), 160 to 171 (DDCDITGDCNET), 172 to 183 (DDCNITGDCNET), 184 to 195 (DDCDITGDCNET), 196 to 207 (DDCNITGDCNET), 208 to 219 (DDCNITGDCNET), 220 to 231 (DDCNITGDCNET), 232 to 243 (DDCNITGDCNET), 244 to 255 (DDCNITGDCNET), 256 to 267 (DDCNITGDCNET), 268 to 279 (DDCDITGDCNET), 280 to 291 (DDCNITGDCNET), 292 to 303 (DDCNITGDCNET), 304 to 315 (DDCNITGDCNET), 316 to 327 (DDCNITGDCNET), 328 to 339 (DDCNITGDCNET), 340 to 351 (DDCNITGDCNET), 352 to 363 (DDCDITGDCNET), 364 to 375 (DDCNITGDCNET), 376 to 387 (DDCNITGDCNET), 388 to 399 (DDCNITGDCNET), 400 to 411 (DDCNITGDCNET), 412 to 423 (DDCNITGDCNET), 424 to 435 (DDCDITGDCNET), 436 to 447 (DDCNITGDCNET), 448 to 459 (DDCDITGDCNET), 460 to 471 (DDCNITGDCNET), 472 to 483 (DDCNITGDCNET), 484 to 495 (DDCNITGDCNET), 496 to 507 (DDCNITGDCNET), 508 to 519 (DDCNITGDCNET), 520 to 531 (DDCNITGDCNET), 532 to 543 (DDCDITGDCNET), 544 to 555 (DDCNITGDCNET), 556 to 567 (DDCNITGDCNET), 568 to 579 (DDCNITGDCNET), 580 to 591 (DDCNITGDCNET), 592 to 603 (DDCNITGDCNET), 604 to 615 (DDCDITGDCNET), 616 to 627 (DDCNITGDCNET), 628 to 639 (DDCDITGDCNET), 640 to 651 (DDCNITGDCNET), 652 to 663 (DDCNITGDCNET), 664 to 675 (DDCNITGDCNET), 676 to 687 (DDCNITGDCNET), 688 to 699 (DDCNITGDCNET), 700 to 711 (DDCNITGDCNET), 712 to 723 (DDCDITGDCNET), 724 to 735 (DDCNITGDCNET), 736 to 747 (DDCNITGDCNET), 748 to 759 (DDCNITGDCNET), 760 to 771 (DDCNITGDCNET), 772 to 783 (DDCNITGDCNET), 784 to 795 (DDCDITGDCNET), 796 to 807 (DDCNITGDCNET), 808 to 819 (DDCDITGDCNET), and 820 to 831 (DDCNITGDCNET). The interval 40–831 (DDCNITGDCN…CNITGDCNET (792 aa)) is 66 X 12 AA tandem repeats of D-D-C-[ND]-I-T-G-D-G-N-E-T. N-linked (GlcNAc...) asparagine glycosylation is found at Asn-67, Asn-79, Asn-91, and Asn-103. N-linked (GlcNAc...) asparagine glycosylation is found at Asn-127, Asn-139, and Asn-151. Asn-175 is a glycosylation site (N-linked (GlcNAc...) asparagine). 6 N-linked (GlcNAc...) asparagine glycosylation sites follow: Asn-199, Asn-211, Asn-223, Asn-235, Asn-247, and Asn-259. Asn-283, Asn-295, Asn-307, Asn-319, Asn-331, and Asn-343 each carry an N-linked (GlcNAc...) asparagine glycan. N-linked (GlcNAc...) asparagine glycans are attached at residues Asn-367, Asn-379, Asn-391, Asn-403, and Asn-415. The N-linked (GlcNAc...) asparagine glycan is linked to Asn-439. 6 N-linked (GlcNAc...) asparagine glycosylation sites follow: Asn-463, Asn-475, Asn-487, Asn-499, Asn-511, and Asn-523. 5 N-linked (GlcNAc...) asparagine glycosylation sites follow: Asn-547, Asn-559, Asn-571, Asn-583, and Asn-595. Asn-619 carries an N-linked (GlcNAc...) asparagine glycan. N-linked (GlcNAc...) asparagine glycosylation is found at Asn-643, Asn-655, Asn-667, Asn-679, Asn-691, and Asn-703. N-linked (GlcNAc...) asparagine glycosylation is found at Asn-727, Asn-739, Asn-751, Asn-763, and Asn-775. Residue Asn-799 is glycosylated (N-linked (GlcNAc...) asparagine). The N-linked (GlcNAc...) asparagine glycan is linked to Asn-823. The chain crosses the membrane as a helical span at residues 883-903 (LLLAGSTFLVLAVGLSAVLFL). Topologically, residues 904–945 (GRERQNAVVICDNEVMMEEVPGCLSDASFAVPVTQSSDEARP) are cytoplasmic.

Its subcellular location is the flagellar pocket. The protein localises to the cell membrane. Its function is as follows. Supposed to function as cell surface receptor. Possibly involved in receptor-mediated endocytosis. The chain is Cysteine-rich, acidic integral membrane protein (CRAM) from Trypanosoma brucei brucei.